Consider the following 317-residue polypeptide: Ribonuclease Z (317 aa).

Positions 63, 65, 67, 68, 143, 214, and 272 each coordinate Zn(2+). Asp67 serves as the catalytic Proton acceptor.

Belongs to the RNase Z family. Homodimer. It depends on Zn(2+) as a cofactor.

It catalyses the reaction Endonucleolytic cleavage of RNA, removing extra 3' nucleotides from tRNA precursor, generating 3' termini of tRNAs. A 3'-hydroxy group is left at the tRNA terminus and a 5'-phosphoryl group is left at the trailer molecule.. Its function is as follows. Zinc phosphodiesterase, which displays some tRNA 3'-processing endonuclease activity. Probably involved in tRNA maturation, by removing a 3'-trailer from precursor tRNA. The chain is Ribonuclease Z from Ligilactobacillus salivarius (strain UCC118) (Lactobacillus salivarius).